Consider the following 286-residue polypeptide: Centromere protein P (286 aa).

Residues 1–73 (MDSETRELRA…RSEHSFLSKL (73 aa)) are a coiled coil. Serine 38 carries the phosphoserine modification.

Belongs to the CENP-P/CTF19 family. In terms of assembly, component of the CENPA-CAD complex, composed of CENPI, CENPK, CENPL, CENPO, CENPP, CENPQ, CENPR and CENPS. The CENPA-CAD complex interacts with the CENPA-NAC complex, at least composed of CENPA, CENPC, CENPH, CENPM, CENPN, CENPT and CENPU.

The protein localises to the nucleus. It is found in the chromosome. It localises to the centromere. Functionally, component of the CENPA-CAD (nucleosome distal) complex, a complex recruited to centromeres which is involved in assembly of kinetochore proteins, mitotic progression and chromosome segregation. May be involved in incorporation of newly synthesized CENPA into centromeres via its interaction with the CENPA-NAC complex. This chain is Centromere protein P (Cenpp), found in Mus musculus (Mouse).